Here is a 438-residue protein sequence, read N- to C-terminus: Xylose isomerase (438 aa).

Mg(2+) contacts are provided by D306 and D308.

This sequence belongs to the xylose isomerase family. In terms of assembly, homotetramer. Mg(2+) serves as cofactor.

It is found in the cytoplasm. It catalyses the reaction alpha-D-xylose = alpha-D-xylulofuranose. This Caldicellulosiruptor bescii (strain ATCC BAA-1888 / DSM 6725 / KCTC 15123 / Z-1320) (Anaerocellum thermophilum) protein is Xylose isomerase.